We begin with the raw amino-acid sequence, 386 residues long: Cobalt-precorrin-5B C(1)-methyltransferase (386 aa).

Belongs to the CbiD family.

The catalysed reaction is Co-precorrin-5B + S-adenosyl-L-methionine = Co-precorrin-6A + S-adenosyl-L-homocysteine. It functions in the pathway cofactor biosynthesis; adenosylcobalamin biosynthesis; cob(II)yrinate a,c-diamide from sirohydrochlorin (anaerobic route): step 6/10. Functionally, catalyzes the methylation of C-1 in cobalt-precorrin-5B to form cobalt-precorrin-6A. This chain is Cobalt-precorrin-5B C(1)-methyltransferase, found in Prochlorococcus marinus (strain MIT 9303).